An 822-amino-acid polypeptide reads, in one-letter code: Penicillin-binding protein 1A (822 aa).

Residues M1–K5 lie on the Cytoplasmic side of the membrane. A helical; Signal-anchor for type II membrane protein membrane pass occupies residues F6–Y26. Topologically, residues L27–F822 are periplasmic. Positions L48 to T216 are transglycosylase. Residue E86 is the Proton donor; for transglycosylase activity of the active site. The segment at I403–R744 is transpeptidase. The active-site Acyl-ester intermediate; for transpeptidase activity is the S461. Disordered regions lie at residues A614–T654 and K790–F822. The span at P812–F822 shows a compositional bias: acidic residues.

This sequence in the N-terminal section; belongs to the glycosyltransferase 51 family. In the C-terminal section; belongs to the transpeptidase family.

Its subcellular location is the cell inner membrane. The catalysed reaction is [GlcNAc-(1-&gt;4)-Mur2Ac(oyl-L-Ala-gamma-D-Glu-L-Lys-D-Ala-D-Ala)](n)-di-trans,octa-cis-undecaprenyl diphosphate + beta-D-GlcNAc-(1-&gt;4)-Mur2Ac(oyl-L-Ala-gamma-D-Glu-L-Lys-D-Ala-D-Ala)-di-trans,octa-cis-undecaprenyl diphosphate = [GlcNAc-(1-&gt;4)-Mur2Ac(oyl-L-Ala-gamma-D-Glu-L-Lys-D-Ala-D-Ala)](n+1)-di-trans,octa-cis-undecaprenyl diphosphate + di-trans,octa-cis-undecaprenyl diphosphate + H(+). The enzyme catalyses Preferential cleavage: (Ac)2-L-Lys-D-Ala-|-D-Ala. Also transpeptidation of peptidyl-alanyl moieties that are N-acyl substituents of D-alanine.. The protein operates within cell wall biogenesis; peptidoglycan biosynthesis. Functionally, cell wall formation. Synthesis of cross-linked peptidoglycan from the lipid intermediates. The enzyme has a penicillin-insensitive transglycosylase N-terminal domain (formation of linear glycan strands) and a penicillin-sensitive transpeptidase C-terminal domain (cross-linking of the peptide subunits). This chain is Penicillin-binding protein 1A (mrcA), found in Pseudomonas aeruginosa (strain ATCC 15692 / DSM 22644 / CIP 104116 / JCM 14847 / LMG 12228 / 1C / PRS 101 / PAO1).